The chain runs to 276 residues: Energy-coupling factor transporter ATP-binding protein EcfA2 (276 aa).

An ABC transporter domain is found at 1–233; that stretch reads MKTPFERLAL…GEEMAGWGLD (233 aa). 27 to 34 lines the ATP pocket; that stretch reads GHTGSGKS. Glu158 functions as the Proton acceptor in the catalytic mechanism.

This sequence belongs to the ABC transporter superfamily. Energy-coupling factor EcfA family. As to quaternary structure, forms a stable energy-coupling factor (ECF) transporter complex composed of 2 membrane-embedded substrate-binding proteins (S component), 2 ATP-binding proteins (A component) and 2 transmembrane proteins (T component).

Its subcellular location is the cell membrane. In terms of biological role, ATP-binding (A) component of a common energy-coupling factor (ECF) ABC-transporter complex. Unlike classic ABC transporters this ECF transporter provides the energy necessary to transport a number of different substrates. The polypeptide is Energy-coupling factor transporter ATP-binding protein EcfA2 (Bacillus subtilis (strain 168)).